The chain runs to 318 residues: Ribose-phosphate pyrophosphokinase (318 aa).

ATP contacts are provided by residues aspartate 40–glutamate 42 and arginine 99–glutamine 100. Mg(2+) contacts are provided by histidine 134 and aspartate 173. Lysine 196 is a catalytic residue. D-ribose 5-phosphate is bound by residues arginine 198, aspartate 222, and aspartate 226–threonine 230.

This sequence belongs to the ribose-phosphate pyrophosphokinase family. Class I subfamily. Homohexamer. The cofactor is Mg(2+).

Its subcellular location is the cytoplasm. It carries out the reaction D-ribose 5-phosphate + ATP = 5-phospho-alpha-D-ribose 1-diphosphate + AMP + H(+). It participates in metabolic intermediate biosynthesis; 5-phospho-alpha-D-ribose 1-diphosphate biosynthesis; 5-phospho-alpha-D-ribose 1-diphosphate from D-ribose 5-phosphate (route I): step 1/1. Functionally, involved in the biosynthesis of the central metabolite phospho-alpha-D-ribosyl-1-pyrophosphate (PRPP) via the transfer of pyrophosphoryl group from ATP to 1-hydroxyl of ribose-5-phosphate (Rib-5-P). This is Ribose-phosphate pyrophosphokinase from Burkholderia pseudomallei (strain K96243).